Reading from the N-terminus, the 130-residue chain is Small ribosomal subunit protein uS8 (130 aa).

The protein belongs to the universal ribosomal protein uS8 family. As to quaternary structure, part of the 30S ribosomal subunit.

Its function is as follows. One of the primary rRNA binding proteins, it binds directly to 16S rRNA central domain where it helps coordinate assembly of the platform of the 30S subunit. The sequence is that of Small ribosomal subunit protein uS8 from Caldivirga maquilingensis (strain ATCC 700844 / DSM 13496 / JCM 10307 / IC-167).